The following is a 156-amino-acid chain: Small ribosomal subunit protein uS7 (156 aa).

Belongs to the universal ribosomal protein uS7 family. As to quaternary structure, part of the 30S ribosomal subunit. Contacts proteins S9 and S11.

In terms of biological role, one of the primary rRNA binding proteins, it binds directly to 16S rRNA where it nucleates assembly of the head domain of the 30S subunit. Is located at the subunit interface close to the decoding center, probably blocks exit of the E-site tRNA. The sequence is that of Small ribosomal subunit protein uS7 from Myxococcus xanthus (strain DK1622).